Here is a 1003-residue protein sequence, read N- to C-terminus: Calcium-transporting ATPase sarcoplasmic/endoplasmic reticulum type (1003 aa).

Topologically, residues 1 to 59 (MEDAHAKKWEEVVDYFGVDPERGLALEQVKKNQEKYGPNELPAEEGKSLLTLILEQFDD) are cytoplasmic. Residues 60-78 (LLVKILLLAAIISLVLALF) form a helical membrane-spanning segment. Residues 79–89 (EEHDDEAEQLT) are Extracellular-facing. A helical transmembrane segment spans residues 90–110 (AYVEPFVILLILIANAVVGVW). Residues 111–262 (QEKNAESAIE…QQKLDEFGEQ (152 aa)) lie on the Cytoplasmic side of the membrane. The helical transmembrane segment at 263 to 282 (LSKVISVICVAVWAINIGHF) threads the bilayer. Residues 283–300 (NDPAHGGSWIKGAIYYFK) lie on the Extracellular side of the membrane. A helical transmembrane segment spans residues 301 to 318 (IAVALAVAAIPEGLPAVI). At 319 to 775 (TTCLALGTRR…RYLISSNIGE (457 aa)) the chain is on the cytoplasmic side. Asp354 serves as the catalytic 4-aspartylphosphate intermediate. Residue Lys519 coordinates ATP. Residues 776–799 (VVSIFLTAALGLPEALIPVQLLWV) form a helical membrane-spanning segment. Over 800 to 840 (NLVTDGLPATALGFNPPDLDIMNKPPRRADEGLITGWLFFR) the chain is Extracellular. A helical membrane pass occupies residues 841 to 863 (YMAIGTYVGAATVGAAAHWFMMS). Topologically, residues 864-898 (PTGPGLNFYQLSHHLQCTPENEYFEGIDCEIFSDP) are cytoplasmic. The helical transmembrane segment at 899–917 (HPMTMALSVLVTIEMLNAI) threads the bilayer. The Extracellular segment spans residues 918–934 (NSLSENQSLLVMPPWSN). Residues 935–954 (IWLISAICLSMTLHFVILYV) form a helical membrane-spanning segment. The Cytoplasmic segment spans residues 955-1003 (EILSTVFQICPLTLTEWIVVLKISFPVLLLDEVLKFVARKYTDEFSFIK).

This sequence belongs to the cation transport ATPase (P-type) (TC 3.A.3) family.

The protein resides in the sarcoplasmic reticulum membrane. The enzyme catalyses Ca(2+)(in) + ATP + H2O = Ca(2+)(out) + ADP + phosphate + H(+). In terms of biological role, this magnesium-dependent enzyme catalyzes the hydrolysis of ATP coupled with the transport of the calcium. This Artemia franciscana (Brine shrimp) protein is Calcium-transporting ATPase sarcoplasmic/endoplasmic reticulum type.